Reading from the N-terminus, the 91-residue chain is Putative defensin-like protein 83 (91 aa).

The N-terminal stretch at 1–27 is a signal peptide; it reads MATNKFLSILLLSLMAFAAILLPMISG. Cystine bridges form between cysteine 32-cysteine 71, cysteine 37-cysteine 57, cysteine 43-cysteine 69, and cysteine 47-cysteine 70.

The protein belongs to the DEFL family.

It is found in the secreted. This chain is Putative defensin-like protein 83 (LCR46), found in Arabidopsis thaliana (Mouse-ear cress).